Consider the following 374-residue polypeptide: Tryptophan--tRNA ligase (374 aa).

Residues 81–89 (PSGPVHIGH) carry the 'HIGH' region motif. The short motif at 258–262 (KMSAS) is the 'KMSKS' region element.

It belongs to the class-I aminoacyl-tRNA synthetase family.

It is found in the cytoplasm. The catalysed reaction is tRNA(Trp) + L-tryptophan + ATP = L-tryptophyl-tRNA(Trp) + AMP + diphosphate + H(+). This is Tryptophan--tRNA ligase from Pyrobaculum calidifontis (strain DSM 21063 / JCM 11548 / VA1).